Here is a 525-residue protein sequence, read N- to C-terminus: Zinc finger C2HC domain-containing protein 1C (525 aa).

Over residues 23–34 (AHGLHSAKHDPY) the composition is skewed to basic and acidic residues. 3 disordered regions span residues 23–48 (AHGL…MGHL), 85–107 (CPHS…GKGL), and 145–171 (VHRK…PDSS). The span at 36-48 (QSDSPQRSSMGHL) shows a compositional bias: polar residues. Positions 90 to 102 (GISQQGSGNNAQG) are enriched in low complexity. The stretch at 207–252 (TQIQRLEAAGESLQKEIRRKEILLREKLKKTEEGLRRIQREKKQAI) forms a coiled coil. Disordered regions lie at residues 292–316 (SRNR…LSDY), 330–349 (NNKI…SQPA), and 356–379 (LQAS…EQEL). The segment covering 301–312 (CEQAQENSSPLQ) has biased composition (polar residues). Positions 359–373 (SSLSGTPGSSGSSSS) are enriched in low complexity. C2HC/C3H-type zinc fingers lie at residues 378-407 (ELGK…MQGS) and 487-516 (DYVQ…IKNR). Zn(2+) contacts are provided by C382, C385, H397, C401, C491, C494, H506, and C510.

It belongs to the ZC2HC1 family. Zn(2+) serves as cofactor.

This chain is Zinc finger C2HC domain-containing protein 1C (Zc2hc1c), found in Rattus norvegicus (Rat).